The sequence spans 313 residues: Nodulation protein D 3 (313 aa).

An HTH lysR-type domain is found at 6–63 (LDLNLLVALDALMTKRSVTAAARSINLSQPAMSSAIARLRSYFQDELFRMQGRELITT). Positions 23–42 (VTAAARSINLSQPAMSSAIA) form a DNA-binding region, H-T-H motif.

It belongs to the LysR transcriptional regulatory family.

Functionally, nodD regulates the expression of the nodABCFE genes which encode other nodulation proteins. NodD is also a negative regulator of its own expression. Binds flavonoids as inducers. In Rhizobium meliloti (strain 1021) (Ensifer meliloti), this protein is Nodulation protein D 3 (nodD3).